A 61-amino-acid chain; its full sequence is Photosystem II reaction center protein Z (61 aa).

2 helical membrane-spanning segments follow: residues 5–25 and 38–58; these read LTAL…VALA and TKGF…DGVA.

It belongs to the PsbZ family. As to quaternary structure, PSII is composed of 1 copy each of membrane proteins PsbA, PsbB, PsbC, PsbD, PsbE, PsbF, PsbH, PsbI, PsbJ, PsbK, PsbL, PsbM, PsbT, PsbX, PsbY, PsbZ, Psb30/Ycf12, at least 3 peripheral proteins of the oxygen-evolving complex and a large number of cofactors. It forms dimeric complexes.

The protein resides in the plastid. It is found in the chloroplast thylakoid membrane. May control the interaction of photosystem II (PSII) cores with the light-harvesting antenna, regulates electron flow through the 2 photosystem reaction centers. PSII is a light-driven water plastoquinone oxidoreductase, using light energy to abstract electrons from H(2)O, generating a proton gradient subsequently used for ATP formation. The chain is Photosystem II reaction center protein Z from Phaeodactylum tricornutum (strain CCAP 1055/1).